A 370-amino-acid polypeptide reads, in one-letter code: Putative F-box/kelch-repeat protein At3g46050 (370 aa).

Residues 15 to 61 (PTSFSSLPDDIVLNCLARVSRFHYPTLSLVCKGFRSLLDSRELHATR) form the F-box domain. 2 Kelch repeats span residues 119–165 (KIYI…VIND) and 167–212 (IYVI…VPGS).

The sequence is that of Putative F-box/kelch-repeat protein At3g46050 from Arabidopsis thaliana (Mouse-ear cress).